A 159-amino-acid polypeptide reads, in one-letter code: Nucleotide-binding protein Psyr_4087 (159 aa).

This sequence belongs to the YajQ family.

Its function is as follows. Nucleotide-binding protein. The chain is Nucleotide-binding protein Psyr_4087 from Pseudomonas syringae pv. syringae (strain B728a).